The primary structure comprises 662 residues: Sodium/glucose cotransporter 1 (662 aa).

Residues 1 to 24 (MDSSTWSPATTATTEPLKPHERIR) lie on the Extracellular side of the membrane. Residues 25–47 (NAADISVIVIYFVVVMAVGLWAM) traverse the membrane as a helical segment. The Cytoplasmic segment spans residues 48-66 (CSTNRGTVGGFFLAGRSMV). Residues 67 to 90 (WWPVGASLFASNIGSGHFVGLAGT) form a helical membrane-spanning segment. Over 91-95 (GAAAG) the chain is Extracellular. Residues 96–117 (IATGGFEWNALIWVVVLGWLFV) traverse the membrane as a helical segment. Over 118 to 139 (PIYIKAGVVTMPEYLRKRFGGK) the chain is Cytoplasmic. The chain crosses the membrane as a helical span at residues 140–169 (RIQVYLSILSLMLYIFTKISADIFSGAIFI). Topologically, residues 170-176 (TLALGLD) are extracellular. Residues 177-193 (LYLAIFLLLAITGLYTI) form a helical membrane-spanning segment. Residues 194-202 (TGGLAAVIY) lie on the Cytoplasmic side of the membrane. The chain crosses the membrane as a helical span at residues 203 to 221 (TDTLQTAIMLVGSFILTGF). Topologically, residues 222-275 (AFHEVGGYDAFMEKYMNAIPTVISDGNITIKKECYTPRADSFHIFRDPLKGDLP) are extracellular. The N-linked (GlcNAc...) asparagine glycan is linked to Asn-248. Cystine bridges form between Cys-255–Cys-511, Cys-255–Cys-608, Cys-345–Cys-351, Cys-355–Cys-361, and Cys-517–Cys-522. Residues 276–295 (WPGLTFGLSILALWYWCTDQ) form a helical membrane-spanning segment. At 296 to 309 (VIVQRCLSAKNMSH) the chain is on the cytoplasmic side. The helical transmembrane segment at 310–331 (VKAGCVMCGYFKLLPMFVIVMP) threads the bilayer. Over 332–375 (GMISRVLYTEKIACTVPSECEKYCGTKVGCSNIAYPTLVVELMP) the chain is Extracellular. A helical transmembrane segment spans residues 376–406 (NGLRGLMLSVMLASLMSSLTSIFNSASTLFT). The Cytoplasmic segment spans residues 407–422 (MDVYTKIRKRASEKEL). Residues 423 to 444 (MIAGRLFILVLIGISIAWVPIV) traverse the membrane as a helical segment. Topologically, residues 445-451 (QSAQSGQ) are extracellular. A helical transmembrane segment spans residues 452-477 (LFDYIQSVTSYLGPPIAAVFLLAIFC). Residues 478-481 (KRVN) are Cytoplasmic-facing. A helical transmembrane segment spans residues 482–504 (EEGAFWGLVIGCMIGLARMITEF). At 505–525 (AYGTGSCVEPSNCPTIICGVH) the chain is on the extracellular side. The helical transmembrane segment at 526 to 547 (YLYFAIILFVISIIIVLVVSLF) threads the bilayer. Residues 548-642 (TKPIPDVHLY…TSEKPLWRTV (95 aa)) lie on the Cytoplasmic side of the membrane. The residue at position 587 (Thr-587) is a Phosphothreonine. A helical membrane pass occupies residues 643–660 (VNINGIILLTVAVFCHAY). The Extracellular segment spans residues 661–662 (FA).

It belongs to the sodium:solute symporter (SSF) (TC 2.A.21) family. Post-translationally, N-glycosylation is not necessary for the cotransporter function.

Its subcellular location is the apical cell membrane. The enzyme catalyses D-glucose(out) + 2 Na(+)(out) = D-glucose(in) + 2 Na(+)(in). The catalysed reaction is D-galactose(out) + 2 Na(+)(out) = D-galactose(in) + 2 Na(+)(in). With respect to regulation, enhanced by the interaction with PDZK1IP1/MAP17; but unlike SLC5A2/SGLT2, PDZK1IP1 is not essential for SLC5A1 transporter activity. Possibly modulated by cholesterol binding. Functionally, electrogenic Na(+)-coupled sugar symporter that actively transports D-glucose or D-galactose at the plasma membrane, with a Na(+) to sugar coupling ratio of 2:1. Transporter activity is driven by a transmembrane Na(+) electrochemical gradient set by the Na(+)/K(+) pump. Has a primary role in the transport of dietary monosaccharides from enterocytes to blood. Responsible for the absorption of D-glucose or D-galactose across the apical brush-border membrane of enterocytes, whereas basolateral exit is provided by GLUT2. Additionally, functions as a D-glucose sensor in enteroendocrine cells, triggering the secretion of the incretins GCG and GIP that control food intake and energy homeostasis. Together with SGLT2, functions in reabsorption of D-glucose from glomerular filtrate, playing a nonredundant role in the S3 segment of the proximal tubules. Transports D-glucose into endometrial epithelial cells, controlling glycogen synthesis and nutritional support for the embryo as well as the decidual transformation of endometrium prior to conception. Acts as a water channel enabling passive water transport in response to the osmotic gradient created upon sugar and Na(+) uptake. Has high water conductivity comparable to aquaporins and therefore is expected to play an important role in transepithelial water permeability, especially in the small intestine. The chain is Sodium/glucose cotransporter 1 (SLC5A1) from Sus scrofa (Pig).